We begin with the raw amino-acid sequence, 61 residues long: Metallothionein-1A (61 aa).

An N-acetylmethionine modification is found at Met-1. Residues 1–29 form a beta region; sequence MDPNCSCATGGSCTCTGSCKCKECKCTSC. A divalent metal cation contacts are provided by Cys-5, Cys-7, Cys-13, Cys-15, Cys-19, Cys-21, Cys-24, Cys-26, Cys-29, Cys-33, Cys-34, Cys-36, Cys-37, Cys-41, Cys-44, Cys-48, Cys-50, and Cys-57. The tract at residues 30-61 is alpha; it reads KKSCCSCCPMSCAKCAQGCICKGASEKCSCCA. Ser-58 carries the post-translational modification Phosphoserine. Cys-59 and Cys-60 together coordinate a divalent metal cation.

Belongs to the metallothionein superfamily. Type 1 family. As to quaternary structure, monomer.

Metallothioneins have a high content of cysteine residues that bind various heavy metals; these proteins are transcriptionally regulated by both heavy metals and glucocorticoids. The sequence is that of Metallothionein-1A (MT1A) from Homo sapiens (Human).